Here is a 278-residue protein sequence, read N- to C-terminus: Hydroxyethylthiazole kinase (278 aa).

M49 lines the substrate pocket. Positions 125 and 171 each coordinate ATP. G198 serves as a coordination point for substrate.

The protein belongs to the Thz kinase family. It depends on Mg(2+) as a cofactor.

It catalyses the reaction 5-(2-hydroxyethyl)-4-methylthiazole + ATP = 4-methyl-5-(2-phosphooxyethyl)-thiazole + ADP + H(+). It functions in the pathway cofactor biosynthesis; thiamine diphosphate biosynthesis; 4-methyl-5-(2-phosphoethyl)-thiazole from 5-(2-hydroxyethyl)-4-methylthiazole: step 1/1. Functionally, catalyzes the phosphorylation of the hydroxyl group of 4-methyl-5-beta-hydroxyethylthiazole (THZ). In Natronomonas pharaonis (strain ATCC 35678 / DSM 2160 / CIP 103997 / JCM 8858 / NBRC 14720 / NCIMB 2260 / Gabara) (Halobacterium pharaonis), this protein is Hydroxyethylthiazole kinase.